A 205-amino-acid chain; its full sequence is Calcium-binding allergen Bet v 3 (205 aa).

The segment at 1-26 (MPCSTEAMEKAGHGHASTPRKRSLSN) is disordered. EF-hand domains lie at 36 to 71 (LNTL…LGLE), 72 to 107 (TDLS…LNDS), 130 to 165 (QEEA…LGFS), and 168 to 203 (SEID…VLVR). Ca(2+)-binding residues include aspartate 49, asparagine 51, aspartate 53, and glutamate 60. Aspartate 143, aspartate 145, aspartate 147, tyrosine 149, glutamate 154, aspartate 181, asparagine 183, aspartate 185, arginine 187, and glutamate 192 together coordinate Ca(2+).

Its function is as follows. Could be involved in calcium metabolism in pollen. Binds 3 calcium ions. This is Calcium-binding allergen Bet v 3 (BETVIII) from Betula pendula (European white birch).